A 394-amino-acid polypeptide reads, in one-letter code: Chaperone protein DnaJ (394 aa).

The J domain occupies 6-71 (DYYEVLEVTK…DKRARYDQFG (66 aa)). The CR-type zinc-finger motif lies at 152-234 (GVEKKFKLKK…CGGEGIEYGE (83 aa)). Zn(2+) contacts are provided by Cys165, Cys168, Cys182, Cys185, Cys208, Cys211, Cys222, and Cys225. 4 CXXCXGXG motif repeats span residues 165–172 (CSHCHGTG), 182–189 (CPTCKGSG), 208–215 (CPTCNGEG), and 222–229 (CKVCGGEG).

Belongs to the DnaJ family. In terms of assembly, homodimer. The cofactor is Zn(2+).

The protein resides in the cytoplasm. Functionally, participates actively in the response to hyperosmotic and heat shock by preventing the aggregation of stress-denatured proteins and by disaggregating proteins, also in an autonomous, DnaK-independent fashion. Unfolded proteins bind initially to DnaJ; upon interaction with the DnaJ-bound protein, DnaK hydrolyzes its bound ATP, resulting in the formation of a stable complex. GrpE releases ADP from DnaK; ATP binding to DnaK triggers the release of the substrate protein, thus completing the reaction cycle. Several rounds of ATP-dependent interactions between DnaJ, DnaK and GrpE are required for fully efficient folding. Also involved, together with DnaK and GrpE, in the DNA replication of plasmids through activation of initiation proteins. This Bacteroides fragilis (strain YCH46) protein is Chaperone protein DnaJ.